A 1091-amino-acid chain; its full sequence is Multiple epidermal growth factor-like domains protein 11 (1091 aa).

Positions 1–18 (MAPSAVGLLVFLLQAALA) are cleaved as a signal peptide. Residues 19–847 (LNPEDPNVCS…SPALGAERHS (829 aa)) are Extracellular-facing. An EMI domain is found at 23 to 100 (DPNVCSHWES…YYENGDFCIP (78 aa)). 14 disulfide bridges follow: cysteine 27–cysteine 88, cysteine 53–cysteine 62, cysteine 87–cysteine 98, cysteine 102–cysteine 117, cysteine 119–cysteine 128, cysteine 145–cysteine 153, cysteine 147–cysteine 160, cysteine 162–cysteine 171, cysteine 184–cysteine 196, cysteine 190–cysteine 203, cysteine 205–cysteine 214, cysteine 227–cysteine 239, cysteine 233–cysteine 246, and cysteine 248–cysteine 257. EGF-like domains are found at residues 94 to 129 (NGDFCIPLCTEECMHGRCVSPDTCHCEPGWGGPDCS), 142 to 172 (SNRCQCQNGALCNPITGACVCAPGFRGWRCE), 180 to 215 (HGKGCQLLCQCHHGASCDPRTGECLCAPGYTGVYCE), 223 to 258 (HGAHCELRCPCQNGGTCHHITGECACPPGWTGAVCA), 266 to 301 (FGQNCSQDCPCHHGGQCDHVTGQCHCTAGYMGDRCQ), 314 to 344 (SQRCDCHNGGQCSPATGACECEPGYKGPSCQ), 398 to 433 (YGNGCQLPCTCQNGADCHSITGSCTCAPGFMGEVCA), 441 to 476 (YGPNCSSVCSCSNGGTCSPVDGSCTCREGWQGLDCS), and 484 to 519 (WGLNCNETCICANGAACSPFDGSCACTPGWLGDSCE). Asparagine 269 carries N-linked (GlcNAc...) asparagine glycosylation. Disulfide bonds link cysteine 270–cysteine 282, cysteine 276–cysteine 289, cysteine 291–cysteine 300, cysteine 317–cysteine 325, cysteine 319–cysteine 332, cysteine 334–cysteine 343, cysteine 402–cysteine 414, cysteine 408–cysteine 421, cysteine 423–cysteine 432, cysteine 445–cysteine 457, cysteine 451–cysteine 464, cysteine 466–cysteine 475, cysteine 488–cysteine 500, cysteine 494–cysteine 507, and cysteine 509–cysteine 518. Residue asparagine 530 is glycosylated (N-linked (GlcNAc...) asparagine). EGF-like domains are found at residues 570–605 (WGPNCSVSCSCENGGSCSPEDGSCECAPGFRGPLCQ), 613–650 (YGHGCAQPCPLCVHSRGPCHHISGICECLPGFSGALCN), 658–693 (FGQDCAQLCSCANNGTCSPIDGSCQCFPGWIGKDCS), 706–736 (FHTCSCHNGASCSAEDGACHCTPGWTGLFCT), 749–779 (GHICQCQNGASCDHITGKCTCRTGFSGRHCE), and 787–822 (FGYGCQQLCECMNNATCDHVTGTCYCSPGFKGIRCD). Cystine bridges form between cysteine 574/cysteine 586, cysteine 580/cysteine 593, cysteine 595/cysteine 604, cysteine 617/cysteine 631, cysteine 621/cysteine 638, cysteine 640/cysteine 649, cysteine 662/cysteine 674, cysteine 668/cysteine 681, cysteine 683/cysteine 692, cysteine 709/cysteine 717, cysteine 711/cysteine 724, cysteine 726/cysteine 735, cysteine 752/cysteine 760, cysteine 754/cysteine 767, cysteine 769/cysteine 778, cysteine 791/cysteine 803, cysteine 797/cysteine 810, and cysteine 812/cysteine 821. Residues 848 to 868 (VGAVTGIVLLLFLVVVLLGLF) form a helical membrane-spanning segment. Residues 869–1091 (AWRRRRQKEK…NIYEVGRCLT (223 aa)) lie on the Cytoplasmic side of the membrane.

This sequence belongs to the MEGF family. Homomer. Does not interact with MEGF10.

It is found in the cell membrane. It localises to the basolateral cell membrane. May regulate the mosaic spacing of specific neuron subtypes in the retina through homotypic retinal neuron repulsion. Mosaics provide a mechanism to distribute each cell type evenly across the retina, ensuring that all parts of the visual field have access to a full set of processing elements. This chain is Multiple epidermal growth factor-like domains protein 11 (Megf11), found in Mus musculus (Mouse).